Reading from the N-terminus, the 486-residue chain is Glutamate--tRNA ligase (486 aa).

A 'HIGH' region motif is present at residues 11–21; it reads PSPTGFLHIGG. Cys-108, Cys-110, Cys-136, and His-138 together coordinate Zn(2+). A 'KMSKS' region motif is present at residues 253-257; that stretch reads KLSKR. Lys-256 lines the ATP pocket.

This sequence belongs to the class-I aminoacyl-tRNA synthetase family. Glutamate--tRNA ligase type 1 subfamily. As to quaternary structure, monomer. Zn(2+) serves as cofactor.

The protein localises to the cytoplasm. It carries out the reaction tRNA(Glu) + L-glutamate + ATP = L-glutamyl-tRNA(Glu) + AMP + diphosphate. Its function is as follows. Catalyzes the attachment of glutamate to tRNA(Glu) in a two-step reaction: glutamate is first activated by ATP to form Glu-AMP and then transferred to the acceptor end of tRNA(Glu). The chain is Glutamate--tRNA ligase from Lysinibacillus sphaericus (strain C3-41).